The primary structure comprises 105 residues: Replication initiation control protein YabA (105 aa).

Zn(2+) contacts are provided by His-79, Cys-81, Cys-95, and Cys-98.

It belongs to the YabA family. As to quaternary structure, homotetramer. Interacts with both DnaA and DnaN, acting as a bridge between these two proteins. It depends on Zn(2+) as a cofactor.

Its subcellular location is the cytoplasm. The protein localises to the nucleoid. Functionally, involved in control of chromosome replication initiation. Inhibits the cooperative binding of DnaA to the oriC region, thus negatively regulating initiation of chromosome replication. Inhibits the ability of DnaA-ATP to form a helix on DNA; does not disassemble preformed DnaA-DNA helices. Decreases the residence time of DnaA on the chromosome at its binding sites (oriC, replication forks and promoter-binding sites). Tethers DnaA to the replication machinery via the DNA polymerase beta sliding clamp subunit (dnaN). Associates with oriC and other DnaA targets on the chromosome in a DnaA-dependent manner. This is Replication initiation control protein YabA from Streptococcus suis (strain 98HAH33).